Consider the following 183-residue polypeptide: uncharacterized protein (183 aa).

The disordered stretch occupies residues 54-89; the sequence is DAASQSDPLPGGDGLTGGDSKATRRTSPRYYPPSEA.

This is an uncharacterized protein from Human cytomegalovirus (strain AD169) (HHV-5).